The chain runs to 375 residues: Alcohol dehydrogenase 1A (375 aa).

Residue Gly-1 is modified to N-acetylglycine. Zn(2+)-binding residues include Cys-46, His-67, Cys-97, Cys-100, Cys-103, Cys-111, and Cys-174. NAD(+) contacts are provided by residues 199 to 204 (GLGGVG), Asp-223, Lys-228, 293 to 295 (VGL), and Arg-370.

The protein belongs to the zinc-containing alcohol dehydrogenase family. Class-I subfamily. Multimeric (with different ratios of monomers). Zn(2+) serves as cofactor.

It localises to the cytoplasm. The catalysed reaction is a primary alcohol + NAD(+) = an aldehyde + NADH + H(+). It catalyses the reaction a secondary alcohol + NAD(+) = a ketone + NADH + H(+). In Saara hardwickii (Indian spiny-tailed lizard), this protein is Alcohol dehydrogenase 1A.